Reading from the N-terminus, the 388-residue chain is Alcohol dehydrogenase patD (388 aa).

Cysteine 46 contacts Zn(2+). Histidine 47 is an NAD(+) binding site. Zn(2+) is bound by residues histidine 67, glutamate 68, cysteine 101, cysteine 104, and cysteine 112. Histidine 67 is a substrate binding site. NAD(+)-binding positions include 198-203 (VALSRG), 295-297 (SLL), and 320-322 (EEA).

Belongs to the zinc-containing alcohol dehydrogenase family. The cofactor is Zn(2+).

It is found in the cytoplasm. The protein resides in the cytosol. The enzyme catalyses neopatulin + NADPH + H(+) = (E)-ascladiol + NADP(+). Its pathway is mycotoxin biosynthesis; patulin biosynthesis. Functionally, alcohol dehydrogenase; part of the gene cluster that mediates the biosynthesis of patulin, an acetate-derived tetraketide mycotoxin produced by several fungal species that shows antimicrobial properties against several bacteria. PatD catalyzes the conversion of neopatulin into E-ascladiol. The pathway begins with the synthesis of 6-methylsalicylic acid by the polyketide synthase (PKS) patK via condensation of acetate and malonate units. The 6-methylsalicylic acid decarboxylase patG then catalyzes the decarboxylation of 6-methylsalicylic acid to yield m-cresol (also known as 3-methylphenol). These first reactions occur in the cytosol. The intermediate m-cresol is then transported into the endoplasmic reticulum where the cytochrome P450 monooxygenase patH converts it to m-hydroxybenzyl alcohol, which is further converted to gentisyl alcohol by the cytochrome P450 monooxygenase patI. The oxidoreductases patJ and patO further convert gentisyl alcohol to isoepoxydon in the vacuole. PatN catalyzes then the transformation of isoepoxydon into phyllostine. The cluster protein patF is responsible for the conversion from phyllostine to neopatulin whereas the alcohol dehydrogenase patD converts neopatulin to E-ascladiol. The steps between isoepoxydon and E-ascladiol occur in the cytosol, and E-ascladiol is probably secreted to the extracellular space by one of the cluster-specific transporters patC or patM. Finally, the secreted patulin synthase patE catalyzes the conversion of E-ascladiol to patulin. The sequence is that of Alcohol dehydrogenase patD from Aspergillus clavatus (strain ATCC 1007 / CBS 513.65 / DSM 816 / NCTC 3887 / NRRL 1 / QM 1276 / 107).